The following is a 370-amino-acid chain: Metalloproteinase (370 aa).

Positions 1–15 (MYLAYIFFLFATVSA) are cleaved as a signal peptide. A Peptidase M12B domain is found at 170–370 (IVIEVLLVTD…DNYGKIFRMF (201 aa)). Asn226 carries N-linked (GalNAc...) asparagine glycosylation. His320 contributes to the Zn(2+) binding site. The active site involves Glu321. His324 and His330 together coordinate Zn(2+).

The protein belongs to the venom metalloproteinase (M12B) family. In terms of tissue distribution, expressed by the venom gland.

It localises to the secreted. Its function is as follows. Metalloprotease that may disrupt the cell matrix and the process of clotting blood or hemolymph. The protein is Metalloproteinase of Tityus obscurus (Amazonian scorpion).